The following is a 134-amino-acid chain: Transcription antitermination protein NusB (134 aa).

It belongs to the NusB family.

Its function is as follows. Involved in transcription antitermination. Required for transcription of ribosomal RNA (rRNA) genes. Binds specifically to the boxA antiterminator sequence of the ribosomal RNA (rrn) operons. The sequence is that of Transcription antitermination protein NusB from Shewanella amazonensis (strain ATCC BAA-1098 / SB2B).